Reading from the N-terminus, the 581-residue chain is Coiled-coil domain-containing protein 102A (581 aa).

Disordered regions lie at residues 1 to 61 (MNHT…GLGC), 156 to 219 (QRVR…IGTD), 496 to 517 (QAED…SLDE), and 534 to 581 (SRLR…LQIP). Low complexity predominate over residues 39–59 (TPSPSGGTPSSSPPLLLSPGL). A coiled-coil region spans residues 70-164 (REELRLRELE…AQRVRAEQSS (95 aa)). Residues 161–184 (EQSSPENASTAPESISSTASTHSN) are compositionally biased toward polar residues. Positions 185–202 (QPREAEIKQDNQDEEGVR) are enriched in basic and acidic residues. A coiled-coil region spans residues 270–541 (AALEEDTSKL…LQSRLRRQQN (272 aa)). Positions 559-581 (EDADGPPSDPDEDEEEELQLQIP) are enriched in acidic residues.

The chain is Coiled-coil domain-containing protein 102A (ccdc102a) from Danio rerio (Zebrafish).